Here is a 634-residue protein sequence, read N- to C-terminus: 3-dehydroshikimate dehydratase (634 aa).

A divalent metal cation is bound by residues E134, D165, Q191, and E239. 2 VOC domains span residues 295-414 (GIEF…LVER) and 440-590 (RVDH…VFTE). Residues H443, H521, and E599 each coordinate Mg(2+).

It belongs to the bacterial two-domain DSD family. As to quaternary structure, homodimer. It depends on Co(2+) as a cofactor. Ni(2+) serves as cofactor. Requires Mg(2+) as cofactor. The cofactor is Mn(2+).

The enzyme catalyses 3-dehydroshikimate = 3,4-dihydroxybenzoate + H2O. It participates in aromatic compound metabolism; 3,4-dihydroxybenzoate biosynthesis. Functionally, catalyzes the conversion of 3-dehydroshikimate to protocatechuate (3,4-dihydroxybenzoate), a common intermediate of quinate and shikimate degradation pathways. Is required for growth on either quinate or shikimate as a sole carbon source. In Pseudomonas aeruginosa (strain ATCC 15692 / DSM 22644 / CIP 104116 / JCM 14847 / LMG 12228 / 1C / PRS 101 / PAO1), this protein is 3-dehydroshikimate dehydratase.